Consider the following 219-residue polypeptide: ATP-dependent Clp protease proteolytic subunit 3 (219 aa).

Ser112 acts as the Nucleophile in catalysis. The active site involves His137.

This sequence belongs to the peptidase S14 family. As to quaternary structure, fourteen ClpP subunits assemble into 2 heptameric rings which stack back to back to give a disk-like structure with a central cavity, resembling the structure of eukaryotic proteasomes.

Its subcellular location is the cytoplasm. The catalysed reaction is Hydrolysis of proteins to small peptides in the presence of ATP and magnesium. alpha-casein is the usual test substrate. In the absence of ATP, only oligopeptides shorter than five residues are hydrolyzed (such as succinyl-Leu-Tyr-|-NHMec, and Leu-Tyr-Leu-|-Tyr-Trp, in which cleavage of the -Tyr-|-Leu- and -Tyr-|-Trp bonds also occurs).. In terms of biological role, cleaves peptides in various proteins in a process that requires ATP hydrolysis. Has a chymotrypsin-like activity. Plays a major role in the degradation of misfolded proteins. The chain is ATP-dependent Clp protease proteolytic subunit 3 from Streptomyces avermitilis (strain ATCC 31267 / DSM 46492 / JCM 5070 / NBRC 14893 / NCIMB 12804 / NRRL 8165 / MA-4680).